The following is a 1257-amino-acid chain: MNTSVLNVNGITFTIYDSYTPQVIYMIIADRLNTTTRMVWFPEFVSTVSDDAPRSGVHSAVDMYMYIRDMVSPSNADGPRSLSDAVQMVKSWVDRDPESNTKFVEHCIIDAYTSNREVNDDVDAQTCVLLDAIITQDVTGNDIHGPEYYREVVRSFRDRCMEHSRNIAANKRLVPMYVTMYSNWSNTTAPTMANMDVEAIRGKYTVYVPEPDERPTVILFNDLVMSEDLVVFAKYGEWLKYDARHPPTADTALSAMSRRTGTKVNNRERNHIALFMVRRGIYSPGMTYDIAHVYPAPGVGYTISVLSNNAPTVDVPRSITTAMGLGGDGIEVSDAGGGVTYTASFVLNDITFVTEYLQHFTLMKCTNKATCIFIDETHLMRHAKEWRRFTISSPRFIYEYNNYTVRFSVTVESTRRDVARVAPYSRIRIYDAPNTNVLYGIANDITSHMIQYKSEELDILKFYTEHLHTDELLNINVRVLRDSKRVKRTPGQLAGQHRQVRRRIQAQRDGDHVDVRSIINVNNYARQCAKLPTVVRSVDLVPDGKEHITFSPGRGLPDVYLYCNHDDAPYPGLAANRLAGNSDEHPFLPCCYRVRRNAAADACDNDSLAPEVRSQTFYNTQRVLPLTAFGKCPGNLEAMLAVQRYCRSTDTNSATFYPKEKVVQGATAVRGAVQVGPNAAIEAVMRAVHCLQSSTADPRSLVIGAEQLERERSKMMEYITCAGQELFDMSSGERLSWLKDNTSYFDPLRLVKLLQYHFDTNVFLYVRGSTVKPVRSIAKTESQRVRLKFYDDYTQAWNDNEDVLSIPYHYAGADYHDMKIHERSVVLYVHSGTEITTLAHPHVEYVLFENHCYITDTIRKTYQALLPQPMRAVYSFVYFDVDDATEEELDVDTANALRAIYYVSKGKQLSAHWRDVAVANSDKTAPRSQTIDGVGRLIGMDGVQLETIRSVEPLPSLPIDNHHHSMFSFHDNMNRRELLNPEHSAKCTYTWYLSKLTRVLLHLTAYTILKKGTLMSELFTVDERRFNLLHDTINSLFEAGVVDRASYMNLLIVEQDRVLTDSVDTARRLVYNASLLLRRMSAYETSEIRKSRYITELLRYETDFTSDESPFSIVTSIDKFILKPRPKTVSLFRPPLSLKHDDTNTVLVQYSVDKHYLSRRVDDAELMRLSDAMRSNTFKEISFDMFDTLYGNGDDADVRERERTSPTLILHVWRNETSSWTVLECTDDVDSEYAGVYFHLNAADPKDRITLKRLTLC.

This sequence belongs to the ascovirus HvAV ORF146 family.

The protein resides in the virion. The protein is Putative structural protein ORF146 of Noctuidae (owlet moths).